We begin with the raw amino-acid sequence, 383 residues long: Schlafen-like protein 3 (383 aa).

The tract at residues 118-266 (FDYQSNFSDV…SDKVYQISSG (149 aa)) is SLFN-like fold. Residues 354-374 (LLDIQNIGWIFFGTALSFCIY) traverse the membrane as a helical segment.

Belongs to the Schlafen family. As to quaternary structure, component of the PUCH (precursor of 21U RNA 5'-end cleavage holoenzyme) complex; consisting of tofu-1, tofu-2 and either slfl-3 or slfl-4. Within the complex, interacts (via N-terminus) with tofu-2 (via N-terminus); the presence of tofu-1 is required for the interaction.

The protein resides in the mitochondrion membrane. Component of the trimeric PUCH (precursor of 21U RNA 5'-end cleavage holoenzyme) complex, that acts as an endoribonuclease processing the 5'-end of precursor Piwi-interacting RNAs (piRNAs). The PUCH complex consists of tofu-1, tofu-2 and either slfl-3 or slfl-4, where tofu-2 exhibits endoribonuclease activity. PUCH-mediated processing strictly requires a 7-methyl-G cap (m7 G-cap) and an uracil at position three (U3). PUCH also exhibits a strict bias for piRNA precursors with an A or G at position 1. Mature piRNA production is enhanced by the interaction of PUCH with the PETISCO complex, which is stabilizing piRNA precursors and allows their processing by PUCH. The protein is Schlafen-like protein 3 of Caenorhabditis elegans.